The following is a 277-amino-acid chain: 4-hydroxy-3-methylbut-2-enyl diphosphate reductase (277 aa).

[4Fe-4S] cluster is bound at residue cysteine 12. Residues histidine 36 and histidine 70 each coordinate (2E)-4-hydroxy-3-methylbut-2-enyl diphosphate. Dimethylallyl diphosphate contacts are provided by histidine 36 and histidine 70. Isopentenyl diphosphate contacts are provided by histidine 36 and histidine 70. Cysteine 92 serves as a coordination point for [4Fe-4S] cluster. Histidine 120 contacts (2E)-4-hydroxy-3-methylbut-2-enyl diphosphate. Residue histidine 120 participates in dimethylallyl diphosphate binding. Position 120 (histidine 120) interacts with isopentenyl diphosphate. Glutamate 122 (proton donor) is an active-site residue. Threonine 158 contributes to the (2E)-4-hydroxy-3-methylbut-2-enyl diphosphate binding site. Residue cysteine 186 participates in [4Fe-4S] cluster binding. (2E)-4-hydroxy-3-methylbut-2-enyl diphosphate is bound by residues serine 214, asparagine 216, and serine 258. The dimethylallyl diphosphate site is built by serine 214, asparagine 216, and serine 258. The isopentenyl diphosphate site is built by serine 214, asparagine 216, and serine 258.

The protein belongs to the IspH family. It depends on [4Fe-4S] cluster as a cofactor.

The catalysed reaction is isopentenyl diphosphate + 2 oxidized [2Fe-2S]-[ferredoxin] + H2O = (2E)-4-hydroxy-3-methylbut-2-enyl diphosphate + 2 reduced [2Fe-2S]-[ferredoxin] + 2 H(+). It catalyses the reaction dimethylallyl diphosphate + 2 oxidized [2Fe-2S]-[ferredoxin] + H2O = (2E)-4-hydroxy-3-methylbut-2-enyl diphosphate + 2 reduced [2Fe-2S]-[ferredoxin] + 2 H(+). It functions in the pathway isoprenoid biosynthesis; dimethylallyl diphosphate biosynthesis; dimethylallyl diphosphate from (2E)-4-hydroxy-3-methylbutenyl diphosphate: step 1/1. Its pathway is isoprenoid biosynthesis; isopentenyl diphosphate biosynthesis via DXP pathway; isopentenyl diphosphate from 1-deoxy-D-xylulose 5-phosphate: step 6/6. Its function is as follows. Catalyzes the conversion of 1-hydroxy-2-methyl-2-(E)-butenyl 4-diphosphate (HMBPP) into a mixture of isopentenyl diphosphate (IPP) and dimethylallyl diphosphate (DMAPP). Acts in the terminal step of the DOXP/MEP pathway for isoprenoid precursor biosynthesis. The sequence is that of 4-hydroxy-3-methylbut-2-enyl diphosphate reductase from Campylobacter jejuni subsp. doylei (strain ATCC BAA-1458 / RM4099 / 269.97).